The following is a 1107-amino-acid chain: Unconventional myosin-Ib (1107 aa).

In terms of domain architecture, Myosin motor spans 15–701 (IGVGDMVLLE…TLFQLEDLRK (687 aa)). Position 60 is a phosphoserine (S60). ATP is bound at residue 108–115 (GESGAGKT). K287 is covalently cross-linked (Glycyl lysine isopeptide (Lys-Gly) (interchain with G-Cter in SUMO1); alternate). K287 is covalently cross-linked (Glycyl lysine isopeptide (Lys-Gly) (interchain with G-Cter in SUMO2); alternate). The actin-binding stretch occupies residues 592 to 599 (YIRCIKPN). IQ domains are found at residues 704–727 (LEDL…FLLM), 728–749 (KRSQ…RYQQ), 750–778 (IKSS…HQKR), 780–807 (KEAA…EEAR), and 808–837 (RKHA…ANAG). Residues 923–1107 (KALYPSSVGQ…NNRLLEVAVP (185 aa)) enclose the TH1 domain.

The protein belongs to the TRAFAC class myosin-kinesin ATPase superfamily. Myosin family. As to expression, prominent expression is seen in the brain, lung and liver. It is also expressed in the heart and testis. A high level expression is seen in virtually all neurons (but not glia) in the postnatal and adult mouse brain and in neuroblasts of the cerebellar external granular layer.

Functionally, motor protein that may participate in process critical to neuronal development and function such as cell migration, neurite outgrowth and vesicular transport. The chain is Unconventional myosin-Ib (Myo1b) from Mus musculus (Mouse).